A 293-amino-acid polypeptide reads, in one-letter code: Phosphatidylserine decarboxylase proenzyme (293 aa).

Residues D90, H147, and S254 each act as charge relay system; for autoendoproteolytic cleavage activity in the active site. S254 (schiff-base intermediate with substrate; via pyruvic acid; for decarboxylase activity) is an active-site residue. The residue at position 254 (S254) is a Pyruvic acid (Ser); by autocatalysis.

The protein belongs to the phosphatidylserine decarboxylase family. PSD-B subfamily. Prokaryotic type I sub-subfamily. In terms of assembly, heterodimer of a large membrane-associated beta subunit and a small pyruvoyl-containing alpha subunit. Pyruvate serves as cofactor. Is synthesized initially as an inactive proenzyme. Formation of the active enzyme involves a self-maturation process in which the active site pyruvoyl group is generated from an internal serine residue via an autocatalytic post-translational modification. Two non-identical subunits are generated from the proenzyme in this reaction, and the pyruvate is formed at the N-terminus of the alpha chain, which is derived from the carboxyl end of the proenzyme. The autoendoproteolytic cleavage occurs by a canonical serine protease mechanism, in which the side chain hydroxyl group of the serine supplies its oxygen atom to form the C-terminus of the beta chain, while the remainder of the serine residue undergoes an oxidative deamination to produce ammonia and the pyruvoyl prosthetic group on the alpha chain. During this reaction, the Ser that is part of the protease active site of the proenzyme becomes the pyruvoyl prosthetic group, which constitutes an essential element of the active site of the mature decarboxylase.

It is found in the cell membrane. The catalysed reaction is a 1,2-diacyl-sn-glycero-3-phospho-L-serine + H(+) = a 1,2-diacyl-sn-glycero-3-phosphoethanolamine + CO2. Its pathway is phospholipid metabolism; phosphatidylethanolamine biosynthesis; phosphatidylethanolamine from CDP-diacylglycerol: step 2/2. Its function is as follows. Catalyzes the formation of phosphatidylethanolamine (PtdEtn) from phosphatidylserine (PtdSer). The chain is Phosphatidylserine decarboxylase proenzyme from Yersinia enterocolitica serotype O:8 / biotype 1B (strain NCTC 13174 / 8081).